The following is an 899-amino-acid chain: Pre-mRNA-splicing factor 6 (899 aa).

Residues Met1–Asp65 form a disordered region. Positions Thr28–Leu51 are enriched in basic and acidic residues. HAT repeat units follow at residues Glu221–Lys253, Arg255–Ser287, Val289–Ser318, Thr319–Asp350, Ala352–Tyr381, Asn383–Pro414, Pro493–Ser525, Asn545–Gln578, Leu608–Tyr645, Leu648–Ser680, Gly682–Ile714, Gly751–His783, and Ala819–Arg851.

As to quaternary structure, component of the U4/U6-U5 tri-snRNP complex composed of the U4, U6 and U5 snRNAs and at least PRP3, PRP4, PRP6, PRP8, PRP18, PRP31, PRP38, SNU13, SNU23, SNU66, SNU114, SPP381, SMB1, SMD1, SMD2, SMD3, SMX2, SMX3, LSM2, LSM3, LSM4, LSM5, LSM6, LSM7, LSM8, BRR2 and DIB1.

The protein localises to the nucleus. In terms of biological role, participates in pre-mRNA splicing. Part of the U4/U5/U6 tri-snRNP complex, one of the building blocks of the spliceosome. This chain is Pre-mRNA-splicing factor 6 (PRP6), found in Saccharomyces cerevisiae (strain ATCC 204508 / S288c) (Baker's yeast).